We begin with the raw amino-acid sequence, 469 residues long: UDP-N-acetylmuramate--L-alanine ligase (469 aa).

Position 112 to 118 (112 to 118 (GTHGKTT)) interacts with ATP.

It belongs to the MurCDEF family.

It localises to the cytoplasm. It catalyses the reaction UDP-N-acetyl-alpha-D-muramate + L-alanine + ATP = UDP-N-acetyl-alpha-D-muramoyl-L-alanine + ADP + phosphate + H(+). It participates in cell wall biogenesis; peptidoglycan biosynthesis. Cell wall formation. The protein is UDP-N-acetylmuramate--L-alanine ligase of Leptothrix cholodnii (strain ATCC 51168 / LMG 8142 / SP-6) (Leptothrix discophora (strain SP-6)).